A 171-amino-acid polypeptide reads, in one-letter code: uncharacterized protein (171 aa).

The protein belongs to the transferase hexapeptide repeat family.

This is an uncharacterized protein from Bacillus subtilis (strain 168).